Here is a 393-residue protein sequence, read N- to C-terminus: Elongation factor Tu (393 aa).

Residues 10-202 (KPHVNIGTIG…AVDEYIPTPE (193 aa)) form the tr-type G domain. Residues 19 to 26 (GHVDHGKT) are G1. Residue 19-26 (GHVDHGKT) coordinates GTP. Thr-26 serves as a coordination point for Mg(2+). Residues 60 to 64 (GITIN) form a G2 region. Residues 81–84 (DCPG) form a G3 region. GTP-binding positions include 81–85 (DCPGH) and 136–139 (NKAD). Positions 136–139 (NKAD) are G4. The segment at 174 to 176 (SAL) is G5.

This sequence belongs to the TRAFAC class translation factor GTPase superfamily. Classic translation factor GTPase family. EF-Tu/EF-1A subfamily. Monomer.

The protein resides in the cytoplasm. The enzyme catalyses GTP + H2O = GDP + phosphate + H(+). Its function is as follows. GTP hydrolase that promotes the GTP-dependent binding of aminoacyl-tRNA to the A-site of ribosomes during protein biosynthesis. The protein is Elongation factor Tu of Clostridium novyi (strain NT).